A 451-amino-acid polypeptide reads, in one-letter code: Phosphoglucosamine mutase (451 aa).

S101 (phosphoserine intermediate) is an active-site residue. Mg(2+) contacts are provided by S101, D240, D242, and D244. The residue at position 101 (S101) is a Phosphoserine.

It belongs to the phosphohexose mutase family. Mg(2+) serves as cofactor. In terms of processing, activated by phosphorylation.

The enzyme catalyses alpha-D-glucosamine 1-phosphate = D-glucosamine 6-phosphate. Its function is as follows. Catalyzes the conversion of glucosamine-6-phosphate to glucosamine-1-phosphate. The polypeptide is Phosphoglucosamine mutase (Streptococcus pyogenes serotype M3 (strain SSI-1)).